A 301-amino-acid chain; its full sequence is MDFAQVKDYLVNLQNNIVAGLEQADGGSFRRDSWDRPEGGGGTSCVIEEGNVLERGGVNFSHVHGKGLPASATAARPELAGRAFEAAGVSLVLHPRNPYAPTVHMNVRFFAAIKEGAEPVWWFGGGMDLTPYYGFEEDAIHFHQICKHALQPSGSEYYPRFKKWCDEYFYLKHRKEPRGIGGVFFDDLNQPDFVTCFNLTKSVGDQFLAAYVPILQKRCNLPYGERERDFQAYRRGRYVEFNLVWDRGTLFGLQSGGRTESILMSLPPIVKWRYDWSPAAGSPEAKLYTDFLIGKDWLPLD.

Ser90 provides a ligand contact to substrate. 2 residues coordinate a divalent metal cation: His94 and His104. Catalysis depends on His104, which acts as the Proton donor. 106-108 (NVR) provides a ligand contact to substrate. A divalent metal cation contacts are provided by His143 and His173. The segment at 238-273 (YVEFNLVWDRGTLFGLQSGGRTESILMSLPPIVKWR) is important for dimerization. Substrate is bound at residue 256-258 (GGR).

The protein belongs to the aerobic coproporphyrinogen-III oxidase family. Homodimer. Requires a divalent metal cation as cofactor.

Its subcellular location is the cytoplasm. It catalyses the reaction coproporphyrinogen III + O2 + 2 H(+) = protoporphyrinogen IX + 2 CO2 + 2 H2O. The protein operates within porphyrin-containing compound metabolism; protoporphyrin-IX biosynthesis; protoporphyrinogen-IX from coproporphyrinogen-III (O2 route): step 1/1. Involved in the heme biosynthesis. Catalyzes the aerobic oxidative decarboxylation of propionate groups of rings A and B of coproporphyrinogen-III to yield the vinyl groups in protoporphyrinogen-IX. The polypeptide is Oxygen-dependent coproporphyrinogen-III oxidase (Nitrosomonas eutropha (strain DSM 101675 / C91 / Nm57)).